A 298-amino-acid chain; its full sequence is ADP/ATP translocase 3 (298 aa).

N-acetylmethionine is present on methionine 1. The Mitochondrial intermembrane portion of the chain corresponds to 1–7 (MTEQAIS). Threonine 2 carries the post-translational modification N-acetylthreonine; in ADP/ATP translocase 3, N-terminally processed. The stretch at 6–98 (ISFAKDFLAG…FAFKDKYKQI (93 aa)) is one Solcar 1 repeat. The helical transmembrane segment at 8–37 (FAKDFLAGGIAAAISKTAVAPIERVKLLLQ) threads the bilayer. The Mitochondrial matrix portion of the chain corresponds to 38–74 (VQHASKQIAADKQYKGIVDCIVRIPKEQGVLSFWRGN). An N6,N6,N6-trimethyllysine modification is found at lysine 52. Residues 75 to 99 (LANVIRYFPTQALNFAFKDKYKQIF) traverse the membrane as a helical segment. Arginine 80 and lysine 92 together coordinate ADP. At 100–109 (LGGVDKHTQF) the chain is on the mitochondrial intermembrane side. Position 105 is an N6-acetyllysine (lysine 105). A helical transmembrane segment spans residues 110 to 130 (WRYFAGNLASGGAAGATSLCF). Solcar repeat units follow at residues 111–201 (RYFA…AKGM) and 212–297 (VSWM…LKKV). The Mitochondrial matrix segment spans residues 131–178 (VYPLDFARTRLAADVGKSATEREFKGLGDCLVKITKSDGIRGLYQGFN). A helical membrane pass occupies residues 179-199 (VSVQGIIIYRAAYFGVYGTAK). Over 200-210 (GMLPDPRNTHI) the chain is Mitochondrial intermembrane. A helical transmembrane segment spans residues 211–231 (VVSWMIAQTVTAVAGVFSYPF). At 232–273 (DTVRRRMMMQSGRKGADIMYKGTLDCWRKIFKDEGGKAFFKG) the chain is on the mitochondrial matrix side. Position 235 (arginine 235) interacts with ADP. Positions 235–240 (RRRMMM) are important for transport activity. The Nucleotide carrier signature motif signature appears at 235–240 (RRRMMM). Lysine 268 carries the N6-acetyllysine modification. Residues 274-291 (AWSNVLRGMGGAFVLVLY) traverse the membrane as a helical segment. Topologically, residues 292-298 (DELKKVI) are mitochondrial intermembrane.

It belongs to the mitochondrial carrier (TC 2.A.29) family. Monomer. Found in a complex with ARL2, ARL2BP and SLC25A6/ANT3. In terms of processing, trimethylated by ANTKMT at Lys-52.

The protein localises to the mitochondrion inner membrane. Its subcellular location is the membrane. It catalyses the reaction ADP(in) + ATP(out) = ADP(out) + ATP(in). The catalysed reaction is H(+)(in) = H(+)(out). The matrix-open state (m-state) is inhibited by the membrane-permeable bongkrekic acid (BKA). The cytoplasmic-open state (c-state) is inhibited by the membrane-impermeable toxic inhibitor carboxyatractyloside (CATR). Proton transporter activity is inhibited by ADP:ATP antiporter activity. ADP:ATP antiporter that mediates import of ADP into the mitochondrial matrix for ATP synthesis, and export of ATP out to fuel the cell. Cycles between the cytoplasmic-open state (c-state) and the matrix-open state (m-state): operates by the alternating access mechanism with a single substrate-binding site intermittently exposed to either the cytosolic (c-state) or matrix (m-state) side of the inner mitochondrial membrane. In addition to its ADP:ATP antiporter activity, also involved in mitochondrial uncoupling and mitochondrial permeability transition pore (mPTP) activity. Plays a role in mitochondrial uncoupling by acting as a proton transporter: proton transport uncouples the proton flows via the electron transport chain and ATP synthase to reduce the efficiency of ATP production and cause mitochondrial thermogenesis. Proton transporter activity is inhibited by ADP:ATP antiporter activity, suggesting that SLC25A6/ANT3 acts as a master regulator of mitochondrial energy output by maintaining a delicate balance between ATP production (ADP:ATP antiporter activity) and thermogenesis (proton transporter activity). Proton transporter activity requires free fatty acids as cofactor, but does not transport it. Also plays a key role in mPTP opening, a non-specific pore that enables free passage of the mitochondrial membranes to solutes of up to 1.5 kDa, and which contributes to cell death. It is however unclear if SLC25A6/ANT3 constitutes a pore-forming component of mPTP or regulates it. This Sus scrofa (Pig) protein is ADP/ATP translocase 3.